A 543-amino-acid chain; its full sequence is Chaperonin GroEL 2 (543 aa).

ATP is bound by residues 29–32, 86–90, Gly413, 478–480, and Asp494; these read TLGP, DGTTT, and NAA.

Belongs to the chaperonin (HSP60) family. In terms of assembly, forms a cylinder of 14 subunits composed of two heptameric rings stacked back-to-back. Interacts with the co-chaperonin GroES.

The protein resides in the cytoplasm. It carries out the reaction ATP + H2O + a folded polypeptide = ADP + phosphate + an unfolded polypeptide.. Functionally, together with its co-chaperonin GroES, plays an essential role in assisting protein folding. The GroEL-GroES system forms a nano-cage that allows encapsulation of the non-native substrate proteins and provides a physical environment optimized to promote and accelerate protein folding. The protein is Chaperonin GroEL 2 of Thermosynechococcus vestitus (strain NIES-2133 / IAM M-273 / BP-1).